Here is a 1274-residue protein sequence, read N- to C-terminus: DENN domain-containing protein 5B (1274 aa).

Serine 2 is modified (N-acetylserine). One can recognise a uDENN domain in the interval 39–244; the sequence is DELAGENFDQ…EVPLPPPGRS (206 aa). Phosphoserine is present on residues serine 49 and serine 178. The 137-residue stretch at 263–399 folds into the cDENN domain; sequence ELPLSDYPLR…VDFIQELSEV (137 aa). Residues 401-581 enclose the dDENN domain; it reads LQFGIPPEGS…DNKIMSQWEE (181 aa). One can recognise an RUN 1 domain in the interval 772–932; sequence LEENTLIASL…DYFCFTSVFT (161 aa). Position 822 is a phosphoserine (serine 822). The chain crosses the membrane as a helical span at residues 916-936; that stretch reads LLSLNAVDYFCFTSVFTTIMI. Residues 936–1044 enclose the PLAT domain; that stretch reads IPYRSVIIPI…DDGSLERILI (109 aa). Residue threonine 1062 is modified to Phosphothreonine. 3 positions are modified to phosphoserine: serine 1068, serine 1076, and serine 1079. The 150-residue stretch at 1118–1267 folds into the RUN 2 domain; sequence TVLLCGENGL…QDFTIVLEGS (150 aa).

Belongs to the RAB6IP1 family.

Its subcellular location is the membrane. Functionally, guanine nucleotide exchange factor (GEF) which may activate RAB39A and/or RAB39B. Promotes the exchange of GDP to GTP, converting inactive GDP-bound Rab proteins into their active GTP-bound form. The polypeptide is DENN domain-containing protein 5B (Dennd5b) (Mus musculus (Mouse)).